A 170-amino-acid polypeptide reads, in one-letter code: Photosystem II extrinsic protein V (170 aa).

A signal peptide spans 1 to 33 (MASLFSTLQRSLKGLLILVPVLIGLVLASPAEA). Positions 70, 73, 74, and 137 each coordinate heme c.

It belongs to the cytochrome c family. PsbV subfamily. In terms of assembly, PSII is composed of 1 copy each of membrane proteins PsbA, PsbB, PsbC, PsbD, PsbE, PsbF, PsbH, PsbI, PsbJ, PsbK, PsbL, PsbM, PsbT, PsbX, PsbY, PsbZ, Psb30/Ycf12, peripheral proteins PsbO, CyanoQ (PsbQ), PsbU, PsbV and a large number of cofactors. It forms dimeric complexes. Requires heme c as cofactor.

It localises to the cellular thylakoid membrane. Its function is as follows. One of the extrinsic, lumenal subunits of photosystem II (PSII). PSII is a light-driven water plastoquinone oxidoreductase, using light energy to abstract electrons from H(2)O, generating a proton gradient subsequently used for ATP formation. The extrinsic proteins stabilize the structure of photosystem II oxygen-evolving complex (OEC), the ion environment of oxygen evolution and protect the OEC against heat-induced inactivation. Low-potential cytochrome c that plays a role in the OEC of PSII. This Parasynechococcus marenigrum (strain WH8102) protein is Photosystem II extrinsic protein V.